The following is a 201-amino-acid chain: Probable molybdenum cofactor guanylyltransferase (201 aa).

Residues L6–G8, K18, D65, and D97 each bind GTP. Mg(2+) is bound at residue D97.

This sequence belongs to the MobA family. Mg(2+) is required as a cofactor.

The protein resides in the cytoplasm. The catalysed reaction is Mo-molybdopterin + GTP + H(+) = Mo-molybdopterin guanine dinucleotide + diphosphate. Its function is as follows. Transfers a GMP moiety from GTP to Mo-molybdopterin (Mo-MPT) cofactor (Moco or molybdenum cofactor) to form Mo-molybdopterin guanine dinucleotide (Mo-MGD) cofactor. The polypeptide is Probable molybdenum cofactor guanylyltransferase (Staphylococcus haemolyticus (strain JCSC1435)).